We begin with the raw amino-acid sequence, 273 residues long: BTB and MATH domain-containing protein 15 (273 aa).

The region spanning 7 to 123 (EFVFHHTFKD…DNSFTIEACV (117 aa)) is the MATH domain. Positions 147–206 (SDVILVVGDEKFYVLKLFLASHSSYFNALFLGKFKEADQSEVTLQNIDPTDFQSLLEVLY) constitute a BTB domain.

As to quaternary structure, interacts with cul-3.

Its pathway is protein modification; protein ubiquitination. Its function is as follows. Probable substrate-specific adapter of an E3 ubiquitin-protein ligase complex which mediates the ubiquitination and subsequent proteasomal degradation of target proteins. In Caenorhabditis elegans, this protein is BTB and MATH domain-containing protein 15 (bath-15).